The following is a 226-amino-acid chain: ATP-dependent dethiobiotin synthetase BioD (226 aa).

Position 12–17 (12–17) interacts with ATP; sequence GVGKTV. Mg(2+) is bound at residue threonine 16. Lysine 37 is an active-site residue. Threonine 41 is a substrate binding site. ATP-binding positions include aspartate 49, 108-111, 169-170, and 197-199; these read EGAG, GS, and PAG. Residues aspartate 49 and glutamate 108 each contribute to the Mg(2+) site.

Belongs to the dethiobiotin synthetase family. As to quaternary structure, homodimer. The cofactor is Mg(2+).

The protein resides in the cytoplasm. The catalysed reaction is (7R,8S)-7,8-diammoniononanoate + CO2 + ATP = (4R,5S)-dethiobiotin + ADP + phosphate + 3 H(+). Its pathway is cofactor biosynthesis; biotin biosynthesis; biotin from 7,8-diaminononanoate: step 1/2. Functionally, catalyzes a mechanistically unusual reaction, the ATP-dependent insertion of CO2 between the N7 and N8 nitrogen atoms of 7,8-diaminopelargonic acid (DAPA, also called 7,8-diammoniononanoate) to form a ureido ring. The sequence is that of ATP-dependent dethiobiotin synthetase BioD from Mycobacterium bovis (strain BCG / Pasteur 1173P2).